The sequence spans 443 residues: MSEMTPREIVHELNRHIIGQDKAKRSVAIALRNRWRRMQLEESLRVEVTPKNILMIGPTGVGKTEIARRLAKLANAPFIKVEATKFTEVGYVGKEVETIIRDLTDVAVKMTHQQAMEKVKFRAEEQAEERILDALLPPARDSWGQVEQKEDTSNTRQIFRKKLREGQLDDKEIEIDVAAPQMGVEIMAPPGMEEMTNQLQGMFQNLAGDTKKKRKLKIKDAMKALAEEEAAKLVNQEELKEAAIFNVENNGIVFIDEIDKICKRGESSGPDVSREGVQRDLLPLIEGSTVSTKHGMVKTDHILFVASGAFQVAKPSDLIPELQGRLPIRVELEALSSNDFKRILTEPKASLTEQYIALMKTEDVDIEFTEDGITRIAEAAWTVNETTENIGARRLHTVMERLMDEISYDAAEQSGAKFVIDAAYVQARLGDTIEDEDLSRFIL.

ATP-binding positions include Ile18, 60–65, Asp256, Glu321, and Arg393; that span reads GVGKTE.

It belongs to the ClpX chaperone family. HslU subfamily. As to quaternary structure, a double ring-shaped homohexamer of HslV is capped on each side by a ring-shaped HslU homohexamer. The assembly of the HslU/HslV complex is dependent on binding of ATP.

The protein resides in the cytoplasm. Functionally, ATPase subunit of a proteasome-like degradation complex; this subunit has chaperone activity. The binding of ATP and its subsequent hydrolysis by HslU are essential for unfolding of protein substrates subsequently hydrolyzed by HslV. HslU recognizes the N-terminal part of its protein substrates and unfolds these before they are guided to HslV for hydrolysis. This is ATP-dependent protease ATPase subunit HslU from Vibrio parahaemolyticus serotype O3:K6 (strain RIMD 2210633).